Reading from the N-terminus, the 460-residue chain is Lipase member H-A (460 aa).

The signal sequence occupies residues 1-26; sequence MLLSFYFNGLLLVGCLLSWGRSDTEG. N-linked (GlcNAc...) asparagine glycosylation is found at Asn-67 and Asn-75. Catalysis depends on Ser-163, which acts as the Nucleophile. The N-linked (GlcNAc...) asparagine glycan is linked to Asn-177. The active-site Charge relay system is Asp-187. Residues Cys-242 and Cys-255 are joined by a disulfide bond. His-257 serves as the catalytic Charge relay system. 2 disulfide bridges follow: Cys-279–Cys-290 and Cys-293–Cys-301. A glycan (N-linked (GlcNAc...) asparagine) is linked at Asn-289. Asn-366 carries N-linked (GlcNAc...) asparagine glycosylation. Cys-436 and Cys-455 are joined by a disulfide.

It belongs to the AB hydrolase superfamily. Lipase family.

The protein localises to the secreted. The protein resides in the cell membrane. It catalyses the reaction 1-hexadecanoyl-2-(9Z-octadecenoyl)-sn-glycero-3-phosphate + H2O = 2-(9Z-octadecenoyl)-sn-glycero-3-phosphate + hexadecanoate + H(+). Hydrolyzes specifically phosphatidic acid (PA) to produce 2-acyl lysophosphatidic acid (LPA; a potent bioactive lipid mediator) and fatty acid. Does not hydrolyze other phospholipids, like phosphatidylserine (PS), phosphatidylcholine (PC) and phosphatidylethanolamine (PE) or triacylglycerol (TG). This Xenopus laevis (African clawed frog) protein is Lipase member H-A (liph-a).